A 352-amino-acid chain; its full sequence is Holliday junction branch migration complex subunit RuvB (352 aa).

Positions 4-191 are large ATPase domain (RuvB-L); that stretch reads TDKLAAPARV…FGIVARLEFY (188 aa). ATP contacts are provided by residues leucine 30, arginine 31, glycine 72, lysine 75, threonine 76, threonine 77, 138 to 140, arginine 181, tyrosine 191, and arginine 228; that span reads EDY. Threonine 76 provides a ligand contact to Mg(2+). The segment at 192-262 is small ATPAse domain (RuvB-S); sequence TADELARIVT…MADAALAMLD (71 aa). Residues 265 to 352 are head domain (RuvB-H); the sequence is SVGFDLMDRK…SGASELFGDA (88 aa). DNA-binding residues include arginine 301, arginine 320, and arginine 325.

It belongs to the RuvB family. As to quaternary structure, homohexamer. Forms an RuvA(8)-RuvB(12)-Holliday junction (HJ) complex. HJ DNA is sandwiched between 2 RuvA tetramers; dsDNA enters through RuvA and exits via RuvB. An RuvB hexamer assembles on each DNA strand where it exits the tetramer. Each RuvB hexamer is contacted by two RuvA subunits (via domain III) on 2 adjacent RuvB subunits; this complex drives branch migration. In the full resolvosome a probable DNA-RuvA(4)-RuvB(12)-RuvC(2) complex forms which resolves the HJ.

The protein localises to the cytoplasm. The enzyme catalyses ATP + H2O = ADP + phosphate + H(+). Functionally, the RuvA-RuvB-RuvC complex processes Holliday junction (HJ) DNA during genetic recombination and DNA repair, while the RuvA-RuvB complex plays an important role in the rescue of blocked DNA replication forks via replication fork reversal (RFR). RuvA specifically binds to HJ cruciform DNA, conferring on it an open structure. The RuvB hexamer acts as an ATP-dependent pump, pulling dsDNA into and through the RuvAB complex. RuvB forms 2 homohexamers on either side of HJ DNA bound by 1 or 2 RuvA tetramers; 4 subunits per hexamer contact DNA at a time. Coordinated motions by a converter formed by DNA-disengaged RuvB subunits stimulates ATP hydrolysis and nucleotide exchange. Immobilization of the converter enables RuvB to convert the ATP-contained energy into a lever motion, pulling 2 nucleotides of DNA out of the RuvA tetramer per ATP hydrolyzed, thus driving DNA branch migration. The RuvB motors rotate together with the DNA substrate, which together with the progressing nucleotide cycle form the mechanistic basis for DNA recombination by continuous HJ branch migration. Branch migration allows RuvC to scan DNA until it finds its consensus sequence, where it cleaves and resolves cruciform DNA. The protein is Holliday junction branch migration complex subunit RuvB of Cupriavidus necator (strain ATCC 17699 / DSM 428 / KCTC 22496 / NCIMB 10442 / H16 / Stanier 337) (Ralstonia eutropha).